Here is a 301-residue protein sequence, read N- to C-terminus: Small ribosomal subunit protein uS2 (301 aa).

Belongs to the universal ribosomal protein uS2 family.

The sequence is that of Small ribosomal subunit protein uS2 from Acidobacterium capsulatum (strain ATCC 51196 / DSM 11244 / BCRC 80197 / JCM 7670 / NBRC 15755 / NCIMB 13165 / 161).